Consider the following 260-residue polypeptide: MIITVLHSHVSFYFIILSFLFFHALHLVGSDGATITIVNRCSFTVWPGILSNSGSGDIGTTGFELVPGGSRSFQAPASWSGRFWARTGCNFNSDTGQGTCLTGDCGSNQVECNGAGAKPPATLAEFTIGSGPADPARKQDFYDVSLVDGYNVPMLVEASGGSEGTCLTTGCVTDLNQKCPTELRFGSGSACKSACEAFGSPEYCCSGAYASPTECKPSMYSEIFKSACPRSYSYAFDDATSTFTCTDADYTITFCPSLPR.

A signal peptide spans Met-1–Gly-32. Cystine bridges form between Cys-41-Cys-255, Cys-89-Cys-100, Cys-105-Cys-112, Cys-166-Cys-245, Cys-171-Cys-228, Cys-179-Cys-191, Cys-195-Cys-204, and Cys-205-Cys-215.

This sequence belongs to the thaumatin family. Expressed only in roots.

Its function is as follows. Involved in local responses of roots to colonization by non-pathogenic plant growth-promoting rhizobacteria (PGPR) fluorescent Pseudomonas spp., but seems to not being required for the establishment of subsequent induced systemic resistance (ISR). This Arabidopsis thaliana (Mouse-ear cress) protein is Thaumatin-like protein 1.